Here is a 436-residue protein sequence, read N- to C-terminus: MKILILGSGVIGVTSAWYLVQQGHEVTVIDRQGSAAEETSAANAGQISPGYATPWGAPGIPLKAIKWMFQRHAPLAIRPDGSLFQLRWMWQMLRNCDASHYAINKSRMVRLAEYSRDCIKQLRADTGIQYEGRQRGTLQLFRTNKQFDNAVNDIAVLEQEGVPYNLLTADKLATVEPALAHAAHKLTGGLQLPNDETGDCQLFTKELVKMAEAAGVTFLFNKQVKQLLVEGHRIIGVQCEDGVMTADNYVVAMGAYSTELLKGLVKIPVYPLKGYSLTMPIVDAERAPVSTALDETYKIAITRFDNRIRVGGMAEVVGFNLNLLKARHETLKMVVQDLYPGGGDITQTHFWTGLRPMTPDGTPIVGPTEYHNLYLNTGHGTLGWTMACGSSQLLADIISGKKPAIASDDLSVFRYVNGFNTKLVPFSHQLHTELRG.

3–17 contacts FAD; the sequence is ILILGSGVIGVTSAW.

It belongs to the DadA oxidoreductase family. Requires FAD as cofactor.

It catalyses the reaction a D-alpha-amino acid + A + H2O = a 2-oxocarboxylate + AH2 + NH4(+). The protein operates within amino-acid degradation; D-alanine degradation; NH(3) and pyruvate from D-alanine: step 1/1. Oxidative deamination of D-amino acids. The polypeptide is D-amino acid dehydrogenase (Photorhabdus laumondii subsp. laumondii (strain DSM 15139 / CIP 105565 / TT01) (Photorhabdus luminescens subsp. laumondii)).